Here is a 470-residue protein sequence, read N- to C-terminus: Nuclear receptor subfamily 0 group B member 1 (470 aa).

3 tandem repeats follow at residues methionine 1–cysteine 67, phenylalanine 68–cysteine 133, and phenylalanine 134–cysteine 200. Residues methionine 1–valine 253 are 4 X 67 AA tandem repeats. 3 short sequence motifs (LXXLL motif) span residues leucine 13 to leucine 17, leucine 80 to leucine 84, and leucine 146 to leucine 150. The 4; truncated repeat unit spans residues phenylalanine 201 to valine 253. Residues aspartate 205–lysine 469 form the NR LBD domain. Residues methionine 461 to leucine 466 carry the AF-2 motif motif.

Belongs to the nuclear hormone receptor family. NR0 subfamily. Homodimer. Interacts with NR5A1, NR5A2, NR0B2 and with COPS2. Interacts with ESRRB; represses ESRRB activity at the GATA6 promoter.

The protein localises to the nucleus. It is found in the cytoplasm. Nuclear receptor that lacks a DNA-binding domain and acts as a corepressor that inhibits the transcriptional activity of other nuclear receptors through heterodimeric interactions. Component of a cascade required for the development of the hypothalamic-pituitary-adrenal-gonadal axis. May also have a role in the development of the embryo and in the maintenance of embryonic stem cell pluripotency. The polypeptide is Nuclear receptor subfamily 0 group B member 1 (NR0B1) (Homo sapiens (Human)).